The following is a 186-amino-acid chain: MNVSKYVAIFSFVFIQLISVGKVFANADEWMTTFRENIAQTWQQPEHYDLYIPAITWHARFAYDKEKTDRYNERPWGGGFGLSRWDEKGNWHGLYAMAFKDSWNKWEPIAGYGWESTWRPLADENFHLGLGFTAGVTARDNWNYIPLPVLLPLASVGYGPVTFQMTYIPGTYNNGNVYFAWMRFQF.

The signal sequence occupies residues 1–25 (MNVSKYVAIFSFVFIQLISVGKVFA). Active-site residues include H58, D101, and S102.

The protein belongs to the lipid A palmitoyltransferase family. Homodimer.

Its subcellular location is the cell outer membrane. The catalysed reaction is lipid A (E. coli) + a 1-hexadecanoyl-2-acyl-sn-glycero-3-phosphocholine = hepta-acyl lipid A (E. coli) + a 2-acyl-sn-glycero-3-phosphocholine. It carries out the reaction lipid IIA + a 1-hexadecanoyl-2-acyl-sn-glycero-3-phosphocholine = lipid IIB + a 2-acyl-sn-glycero-3-phosphocholine. It catalyses the reaction lipid IVA (E. coli) + a 1-hexadecanoyl-2-acyl-sn-glycero-3-phosphocholine = lipid IVB (E. coli) + a 2-acyl-sn-glycero-3-phosphocholine. Its activity is regulated as follows. Inhibited by lauryldimethylamine oxide (LDAO) and dodecylphosphocholine (DPC). Transfers a palmitate residue from the sn-1 position of a phospholipid to the N-linked hydroxymyristate on the proximal unit of lipid A or its precursors. Phosphatidylglycerol (PtdGro), phosphatidylethanolamine (PtdEtn), phosphatidylserine (PtdSer) and phosphatidic acid (Ptd-OH) are all effective acyl donors. The sequence is that of Lipid A palmitoyltransferase PagP from Escherichia coli (strain K12).